Here is a 185-residue protein sequence, read N- to C-terminus: Large ribosomal subunit protein uL22 (185 aa).

Residues 160–185 (VSHDDSQKKKVSKKKLARQKEKMMRE) are disordered.

This sequence belongs to the universal ribosomal protein uL22 family.

This chain is Large ribosomal subunit protein uL22 (RpL17), found in Maconellicoccus hirsutus (Pink hibiscus mealybug).